Reading from the N-terminus, the 127-residue chain is Small ribosomal subunit protein uS13 (127 aa).

The disordered stretch occupies residues 90–127 (RRHRQGLPVRGQRTRTNARTRRGRRVTVAGKKKAPSKK). Residues 101–127 (QRTRTNARTRRGRRVTVAGKKKAPSKK) show a composition bias toward basic residues.

The protein belongs to the universal ribosomal protein uS13 family. Part of the 30S ribosomal subunit. Forms a loose heterodimer with protein S19. Forms two bridges to the 50S subunit in the 70S ribosome.

Its function is as follows. Located at the top of the head of the 30S subunit, it contacts several helices of the 16S rRNA. In the 70S ribosome it contacts the 23S rRNA (bridge B1a) and protein L5 of the 50S subunit (bridge B1b), connecting the 2 subunits; these bridges are implicated in subunit movement. Contacts the tRNAs in the A and P-sites. This Rippkaea orientalis (strain PCC 8801 / RF-1) (Cyanothece sp. (strain PCC 8801)) protein is Small ribosomal subunit protein uS13.